The primary structure comprises 491 residues: uncharacterized protein (491 aa).

A PE domain is found at 1-92; it reads MSFVIASPEA…GGGSYASAEI (92 aa). Disordered regions lie at residues 114–156, 376–400, and 419–491; these read PLVG…AGGA, AGGS…GNPG, and AGQG…GPDG. Residues 128-145 are compositionally biased toward gly residues; sequence GQPGGDGGILWGNGGNGG. Gly residues predominate over residues 432 to 480; it reads GGPGGVGGHGGTAILFGDGGAGGAGAAGGPGTPDGAAGPGGSGGTGGLL.

Belongs to the mycobacterial PE family. PGRS subfamily.

This is an uncharacterized protein from Mycobacterium bovis (strain ATCC BAA-935 / AF2122/97).